Reading from the N-terminus, the 480-residue chain is Coronin-2B (480 aa).

WD repeat units follow at residues 85–125 (GHQG…LKRN), 135–177 (GHSR…KMID), 179–217 (HRDV…VLQE), 220–263 (CKTH…MPVT), and 265–308 (EEID…PYLT). A coiled-coil region spans residues 436–475 (NELLRMFFRQQEEIRRLKEQLSQRDLLVRQLELELKNLRN).

Belongs to the WD repeat coronin family.

It localises to the cytoplasm. The protein resides in the cytoskeleton. Functionally, may play a role in the reorganization of neuronal actin structure. In Xenopus tropicalis (Western clawed frog), this protein is Coronin-2B (coro2b).